A 390-amino-acid chain; its full sequence is tRNA(Met) cytidine acetate ligase (390 aa).

ATP is bound by residues 7–20 (ITEY…HIYH), Gly101, Asn152, and Arg177.

It belongs to the TmcAL family.

The protein localises to the cytoplasm. It catalyses the reaction cytidine(34) in elongator tRNA(Met) + acetate + ATP = N(4)-acetylcytidine(34) in elongator tRNA(Met) + AMP + diphosphate. In terms of biological role, catalyzes the formation of N(4)-acetylcytidine (ac(4)C) at the wobble position of elongator tRNA(Met), using acetate and ATP as substrates. First activates an acetate ion to form acetyladenylate (Ac-AMP) and then transfers the acetyl group to tRNA to form ac(4)C34. The polypeptide is tRNA(Met) cytidine acetate ligase (Leuconostoc mesenteroides subsp. mesenteroides (strain ATCC 8293 / DSM 20343 / BCRC 11652 / CCM 1803 / JCM 6124 / NCDO 523 / NBRC 100496 / NCIMB 8023 / NCTC 12954 / NRRL B-1118 / 37Y)).